The chain runs to 431 residues: Adenylosuccinate synthetase (431 aa).

GTP is bound by residues 12–18 (GDEGKGK) and 40–42 (GHT). Aspartate 13 acts as the Proton acceptor in catalysis. 2 residues coordinate Mg(2+): aspartate 13 and glycine 40. Residues 13–16 (DEGK), 38–41 (NAGH), threonine 131, arginine 145, glutamine 225, threonine 240, and arginine 304 each bind IMP. The active-site Proton donor is the histidine 41. 300 to 306 (TTTGRKR) contributes to the substrate binding site. Residues arginine 306, 332-334 (KLD), and 414-416 (STS) each bind GTP.

Belongs to the adenylosuccinate synthetase family. Homodimer. Requires Mg(2+) as cofactor.

It is found in the cytoplasm. The catalysed reaction is IMP + L-aspartate + GTP = N(6)-(1,2-dicarboxyethyl)-AMP + GDP + phosphate + 2 H(+). It participates in purine metabolism; AMP biosynthesis via de novo pathway; AMP from IMP: step 1/2. In terms of biological role, plays an important role in the de novo pathway of purine nucleotide biosynthesis. Catalyzes the first committed step in the biosynthesis of AMP from IMP. This Dinoroseobacter shibae (strain DSM 16493 / NCIMB 14021 / DFL 12) protein is Adenylosuccinate synthetase.